We begin with the raw amino-acid sequence, 192 residues long: ADP-ribosylation factor-like protein 14 (192 aa).

Gly-2 carries N-myristoyl glycine lipidation. GTP contacts are provided by residues 20-27 (GLDSAGKS), 64-68 (DVGGQ), and 123-126 (NKQD).

It belongs to the small GTPase superfamily. Arf family. In terms of assembly, interacts with ARL14EP. Expressed in immature dendritic cells.

It is found in the cytoplasmic vesicle. Functionally, GTPase that recruits MYO1E to MHC class II-containing vesicles via the effector protein ARL14EP and hence controls the movement of these vesicles along the actin cytoskeleton in dendritic cells. The sequence is that of ADP-ribosylation factor-like protein 14 (ARL14) from Homo sapiens (Human).